The sequence spans 147 residues: Hemoglobin subunit beta (147 aa).

An N-acetylvaline modification is found at V2. A Globin domain is found at 3–147 (HLTGEEKSAV…VANALAHKYH (145 aa)). T13 bears the Phosphothreonine mark. S45 is subject to Phosphoserine. K60 bears the N6-acetyllysine mark. H64 lines the heme b pocket. An N6-acetyllysine modification is found at K83. H93 lines the heme b pocket. C94 is subject to S-nitrosocysteine. Residue K145 is modified to N6-acetyllysine.

This sequence belongs to the globin family. Heterotetramer of two alpha chains and two beta chains. As to expression, red blood cells.

Functionally, involved in oxygen transport from the lung to the various peripheral tissues. The protein is Hemoglobin subunit beta (HBB) of Callithrix jacchus (White-tufted-ear marmoset).